The following is a 218-amino-acid chain: Probable septum site-determining protein MinC (218 aa).

The protein belongs to the MinC family. In terms of assembly, interacts with MinD and FtsZ.

Functionally, cell division inhibitor that blocks the formation of polar Z ring septums. Rapidly oscillates between the poles of the cell to destabilize FtsZ filaments that have formed before they mature into polar Z rings. Prevents FtsZ polymerization. The chain is Probable septum site-determining protein MinC from Moorella thermoacetica (strain ATCC 39073 / JCM 9320).